Reading from the N-terminus, the 147-residue chain is Hemoglobin subunit gamma (147 aa).

In terms of domain architecture, Globin spans 3–147; that stretch reads HFTAEEKAAI…VATALAHKYH (145 aa). Positions 64 and 93 each coordinate heme b.

Belongs to the globin family. As to quaternary structure, heterotetramer of two alpha chains and two gamma chains. Red blood cells.

Its function is as follows. This protein functions as an embryonic globin, but the gene structure and chromosomal location resemble more closely the human gamma chain gene, which codes for a fetal globin. The chain is Hemoglobin subunit gamma (HBG) from Oryctolagus cuniculus (Rabbit).